The sequence spans 288 residues: DegV domain-containing protein MYPU_3590 (288 aa).

Positions 3 to 275 (IAIVIDSSSG…LGAIAISLVK (273 aa)) constitute a DegV domain. Hexadecanoate-binding residues include S61 and S92.

Functionally, may bind long-chain fatty acids, such as palmitate, and may play a role in lipid transport or fatty acid metabolism. This Mycoplasmopsis pulmonis (strain UAB CTIP) (Mycoplasma pulmonis) protein is DegV domain-containing protein MYPU_3590.